The chain runs to 495 residues: MRGDSFIWSLATAIPLLSTAVESLKVVKRDNPSVLGFDIERFQAAKPVHRDIIAKRASTKTISQDLDNQKNLYFCNLTLGTPPQTIRAHIDTGSSDLWVNTAESRFCSSRRAPCSQGGTYDSSSSSTYQLVNNDFNISYVDGSGATGDYVTDVINVGGIKLKDFQFAIGHTSSSPLGVLGIGYEAGEAQVTRSGDQSYPNLPAALVKAGHIRSNAYSLWLNDLSASRGQILFGGIDTGKFQGKLQTVPVLHTSRGDYTSLVVALTGVGIRTGSDGSIDTFPSQPVAVAMDSGSSLSYLPDALAAKVYNSVDAVFDPANNLAFVPCSMANDKRKLVFTFSSPQIAVGMDELVIDLGPDANGNEATFRDGSKACVFGIAPAGSSISILGDTVLRSAYLVYDLDNNEISIAPTRFNSTETNIMEIGTGENSVPDATGVPNAVTSAQVTQATGLPGVETGVPGSRPPSSKAAGQAKRPDFVLGVAAVGLAGAGMLFAAM.

The N-terminal stretch at 1–19 is a signal peptide; it reads MRGDSFIWSLATAIPLLST. In terms of domain architecture, Peptidase A1 spans 73-408; the sequence is YFCNLTLGTP…DLDNNEISIA (336 aa). N-linked (GlcNAc...) asparagine glycosylation is present at Asn-76. Asp-91 is a catalytic residue. N-linked (GlcNAc...) asparagine glycosylation occurs at Asn-136. Asp-290 is a catalytic residue. An N-linked (GlcNAc...) asparagine glycan is attached at Asn-413. Residues 448-470 form a disordered region; the sequence is TGLPGVETGVPGSRPPSSKAAGQ. A lipid anchor (GPI-anchor amidated alanine) is attached at Ala-467. Positions 468-495 are cleaved as a propeptide — removed in mature form; that stretch reads AGQAKRPDFVLGVAAVGLAGAGMLFAAM.

It belongs to the peptidase A1 family.

It localises to the cell membrane. In terms of biological role, probable GPI-anchored aspartic-type endopeptidase which contributes to virulence. The chain is Probable aspartic-type endopeptidase OPSB (OPSB) from Trichophyton verrucosum (strain HKI 0517).